A 1828-amino-acid chain; its full sequence is Chromodomain-helicase-DNA-binding protein 2 (1828 aa).

The span at 1-14 (MMRNKDKSQEEDSS) shows a compositional bias: basic and acidic residues. The interval 1–243 (MMRNKDKSQE…EDDDFETDSD (243 aa)) is disordered. A compositionally biased stretch (low complexity) spans 15–75 (LHSNASSHSA…SESESAGSKS (61 aa)). Composition is skewed to basic and acidic residues over residues 81–101 (EAKE…KMWE), 115–128 (SRQE…KEEA), and 146–155 (KKQEKWKQEP). A compositionally biased stretch (basic residues) spans 175–204 (VKARRPVPRRTVPKPRVKKQPKTQRGKRKK). Phosphoserine occurs at positions 207 and 208. A compositionally biased stretch (acidic residues) spans 234-243 (EDDDFETDSD). Phosphothreonine is present on Thr240. Ser242 bears the Phosphoserine mark. Chromo domains are found at residues 261–353 (ETIE…QWLG) and 378–456 (QIVE…IPTR). The Helicase ATP-binding domain occupies 496 to 666 (AHSWCKNNSV…WSLLHFIMPE (171 aa)). 509–516 (DEMGLGKT) provides a ligand contact to ATP. The DEAH box motif lies at 617–620 (DEAH). The Helicase C-terminal domain occupies 795–946 (LLDKLLTRLR…HLVIQRMDTT (152 aa)). 4 disordered regions span residues 1030-1124 (EDEE…RSVR), 1331-1462 (VTGG…DEDD), 1556-1638 (HKKR…ADRG), and 1680-1828 (HMDA…VRKT). Residues 1037-1065 (ERPHKDWDEIIPEEQRKKVEEEERQKELE) show a composition bias toward basic and acidic residues. Phosphoserine occurs at positions 1085, 1087, 1365, and 1386. Over residues 1347-1371 (KKENKVPRLKEEHGIELSSPRHSDN) the composition is skewed to basic and acidic residues. Basic and acidic residues-rich tracts occupy residues 1396 to 1431 (ENKE…KSGD) and 1565 to 1574 (EQKKKDDVTG). The CHD1 helical C-terminal domain (CHCT) stretch occupies residues 1464–1566 (LDQETFSICK…KKRSQEEEEQ (103 aa)). Polar residues predominate over residues 1584-1601 (SGSSRDSLISQSHTSHNL). Composition is skewed to basic and acidic residues over residues 1698–1720 (RPYD…DRHH), 1739–1749 (QDFRRMSDHRP), 1760–1772 (DHYR…KLGE), and 1795–1814 (SPHD…RSLE). Ser1807 carries the post-translational modification Phosphoserine.

This sequence belongs to the SNF2/RAD54 helicase family. In terms of assembly, interacts with MYOD1. Interacts with histone H3.3.

Its subcellular location is the nucleus. It catalyses the reaction ATP + H2O = ADP + phosphate + H(+). Functionally, ATP-dependent chromatin-remodeling factor that specifically binds to the promoter of target genes, leading to chromatin remodeling, possibly by promoting deposition of histone H3.3. Involved in myogenesis via interaction with MYOD1: binds to myogenic gene regulatory sequences and mediates incorporation of histone H3.3 prior to the onset of myogenic gene expression, promoting their expression. In Homo sapiens (Human), this protein is Chromodomain-helicase-DNA-binding protein 2 (CHD2).